The primary structure comprises 145 residues: Putative nickel-responsive regulator (145 aa).

Positions 77, 88, 90, and 96 each coordinate Ni(2+).

It belongs to the transcriptional regulatory CopG/NikR family. Ni(2+) serves as cofactor.

Functionally, transcriptional regulator. This chain is Putative nickel-responsive regulator, found in Rhizobium rhizogenes (strain K84 / ATCC BAA-868) (Agrobacterium radiobacter).